We begin with the raw amino-acid sequence, 31 residues long: Ice-structuring glycoprotein 3 (31 aa).

Threonine 3, threonine 6, threonine 9, threonine 12, threonine 15, threonine 18, threonine 21, threonine 24, threonine 27, and threonine 30 each carry an O-linked (GalNAc...) threonine glycan.

O-linked glycans consist of Gal-GalNAc disaccharides. The three proteins may differ only in the number of repeating units of -Ala-Ala-Thr-.

Its subcellular location is the secreted. Functionally, antifreeze proteins lower the blood freezing point. This fish lives in antarctic waters where it experiences water temperatures near -1.9 degrees Celsius. Its blood has a freezing point of about -2.0 degrees Celsius, and 30% of the freezing-point depression is due mainly to the 3 major high molecular weight glycoproteins in the plasma. In Pagothenia borchgrevinki (Bald rockcod), this protein is Ice-structuring glycoprotein 3.